The following is a 495-amino-acid chain: Putative aldehyde dehydrogenase AldA (495 aa).

NAD(+) is bound at residue 212–218 (GKGSESG). Active-site residues include Glu-256 and Cys-290.

It belongs to the aldehyde dehydrogenase family.

It carries out the reaction an aldehyde + NAD(+) + H2O = a carboxylate + NADH + 2 H(+). In Staphylococcus aureus (strain bovine RF122 / ET3-1), this protein is Putative aldehyde dehydrogenase AldA (aldA).